Consider the following 164-residue polypeptide: Peptide deformylase (164 aa).

Fe cation is bound by residues Cys-87 and His-129. Glu-130 is a catalytic residue. Fe cation is bound at residue His-133.

The protein belongs to the polypeptide deformylase family. Fe(2+) serves as cofactor.

It carries out the reaction N-terminal N-formyl-L-methionyl-[peptide] + H2O = N-terminal L-methionyl-[peptide] + formate. Functionally, removes the formyl group from the N-terminal Met of newly synthesized proteins. Requires at least a dipeptide for an efficient rate of reaction. N-terminal L-methionine is a prerequisite for activity but the enzyme has broad specificity at other positions. In Thermotoga petrophila (strain ATCC BAA-488 / DSM 13995 / JCM 10881 / RKU-1), this protein is Peptide deformylase.